A 197-amino-acid polypeptide reads, in one-letter code: dITP/XTP pyrophosphatase (197 aa).

Position 8 to 13 (Thr-8 to Lys-13) interacts with substrate. Residues Glu-40 and Asp-69 each coordinate Mg(2+). The active-site Proton acceptor is the Asp-69. Residues Ser-70, Phe-154–Asp-157, Lys-177, and His-182–Arg-183 each bind substrate.

Belongs to the HAM1 NTPase family. In terms of assembly, homodimer. Mg(2+) is required as a cofactor.

The catalysed reaction is XTP + H2O = XMP + diphosphate + H(+). It carries out the reaction dITP + H2O = dIMP + diphosphate + H(+). The enzyme catalyses ITP + H2O = IMP + diphosphate + H(+). Functionally, pyrophosphatase that catalyzes the hydrolysis of nucleoside triphosphates to their monophosphate derivatives, with a high preference for the non-canonical purine nucleotides XTP (xanthosine triphosphate), dITP (deoxyinosine triphosphate) and ITP. Seems to function as a house-cleaning enzyme that removes non-canonical purine nucleotides from the nucleotide pool, thus preventing their incorporation into DNA/RNA and avoiding chromosomal lesions. The protein is dITP/XTP pyrophosphatase of Yersinia pestis.